A 225-amino-acid chain; its full sequence is MTMLLPLFILVGFIADYFVNAIAYHLSPLEDKTALTFRQVLVHFRQKKYAWHDTVPLILCVAAAIACALAPFTPIVTGALFLYFCFVLTLSVIDFRTQLLPDKLTLPLLWLGLVFNAQYGLIDLHDAVYGAVAGYGVLWCVYWGVWLVCHKEGLGYGDFKLLAAAGAWCGWQTLPMILLIASLGGIGYAIVSQLLQRRTITTIAFGPWLALGSMINLGYLAWISY.

Residues 1 to 2 are Periplasmic-facing; the sequence is MT. Residues 3-23 traverse the membrane as a helical segment; sequence MLLPLFILVGFIADYFVNAIA. The Cytoplasmic portion of the chain corresponds to 24–67; the sequence is YHLSPLEDKTALTFRQVLVHFRQKKYAWHDTVPLILCVAAAIAC. Residues 68–88 form a helical membrane-spanning segment; that stretch reads ALAPFTPIVTGALFLYFCFVL. The Periplasmic segment spans residues 89 to 103; sequence TLSVIDFRTQLLPDK. Residues 104 to 124 traverse the membrane as a helical segment; it reads LTLPLLWLGLVFNAQYGLIDL. At 125-127 the chain is on the cytoplasmic side; it reads HDA. Residues 128–148 form a helical membrane-spanning segment; the sequence is VYGAVAGYGVLWCVYWGVWLV. Residues 149-174 lie on the Periplasmic side of the membrane; sequence CHKEGLGYGDFKLLAAAGAWCGWQTL. A helical transmembrane segment spans residues 175–195; sequence PMILLIASLGGIGYAIVSQLL. Topologically, residues 196 to 202 are cytoplasmic; the sequence is QRRTITT. Residues 203–223 traverse the membrane as a helical segment; sequence IAFGPWLALGSMINLGYLAWI. Residues 224–225 are Periplasmic-facing; that stretch reads SY.

Belongs to the peptidase A24 family.

The protein localises to the cell inner membrane. The catalysed reaction is Typically cleaves a -Gly-|-Phe- bond to release an N-terminal, basic peptide of 5-8 residues from type IV prepilin, and then N-methylates the new N-terminal amino group, the methyl donor being S-adenosyl-L-methionine.. Its function is as follows. Plays a role in type II pseudopili formation by proteolytically removing the leader sequence from substrate proteins and subsequently monomethylating the alpha-amino group of the newly exposed N-terminal phenylalanine. Substrates include proteins required for biogenesis of the type II general secretory apparatus. This chain is Prepilin leader peptidase/N-methyltransferase (gspO), found in Escherichia coli (strain K12).